A 427-amino-acid chain; its full sequence is Serine--tRNA ligase (427 aa).

Residue 232-234 (TAE) participates in L-serine binding. 263–265 (RSE) is a binding site for ATP. Glutamate 286 is a binding site for L-serine. An ATP-binding site is contributed by 350–353 (EISS). Serine 385 serves as a coordination point for L-serine.

Belongs to the class-II aminoacyl-tRNA synthetase family. Type-1 seryl-tRNA synthetase subfamily. In terms of assembly, homodimer. The tRNA molecule binds across the dimer.

Its subcellular location is the cytoplasm. It catalyses the reaction tRNA(Ser) + L-serine + ATP = L-seryl-tRNA(Ser) + AMP + diphosphate + H(+). The enzyme catalyses tRNA(Sec) + L-serine + ATP = L-seryl-tRNA(Sec) + AMP + diphosphate + H(+). The protein operates within aminoacyl-tRNA biosynthesis; selenocysteinyl-tRNA(Sec) biosynthesis; L-seryl-tRNA(Sec) from L-serine and tRNA(Sec): step 1/1. Functionally, catalyzes the attachment of serine to tRNA(Ser). Is also able to aminoacylate tRNA(Sec) with serine, to form the misacylated tRNA L-seryl-tRNA(Sec), which will be further converted into selenocysteinyl-tRNA(Sec). In Lacticaseibacillus casei (strain BL23) (Lactobacillus casei), this protein is Serine--tRNA ligase.